We begin with the raw amino-acid sequence, 499 residues long: Probable cytosol aminopeptidase (499 aa).

Lys263 and Asp268 together coordinate Mn(2+). The active site involves Lys275. Residues Asp286, Asp345, and Glu347 each coordinate Mn(2+). Arg349 is a catalytic residue.

The protein belongs to the peptidase M17 family. The cofactor is Mn(2+).

Its subcellular location is the cytoplasm. It carries out the reaction Release of an N-terminal amino acid, Xaa-|-Yaa-, in which Xaa is preferably Leu, but may be other amino acids including Pro although not Arg or Lys, and Yaa may be Pro. Amino acid amides and methyl esters are also readily hydrolyzed, but rates on arylamides are exceedingly low.. It catalyses the reaction Release of an N-terminal amino acid, preferentially leucine, but not glutamic or aspartic acids.. In terms of biological role, presumably involved in the processing and regular turnover of intracellular proteins. Catalyzes the removal of unsubstituted N-terminal amino acids from various peptides. The chain is Probable cytosol aminopeptidase from Chlamydia trachomatis serovar L2 (strain ATCC VR-902B / DSM 19102 / 434/Bu).